The chain runs to 357 residues: 3-isopropylmalate dehydrogenase (357 aa).

Positions 97, 107, 135, and 224 each coordinate substrate. Residues D224, D248, and D252 each coordinate Mg(2+). 282–294 (GSAPDIAGQDKAN) serves as a coordination point for NAD(+).

The protein belongs to the isocitrate and isopropylmalate dehydrogenases family. LeuB type 1 subfamily. In terms of assembly, homodimer. Requires Mg(2+) as cofactor. The cofactor is Mn(2+).

The protein localises to the cytoplasm. The enzyme catalyses (2R,3S)-3-isopropylmalate + NAD(+) = 4-methyl-2-oxopentanoate + CO2 + NADH. The protein operates within amino-acid biosynthesis; L-leucine biosynthesis; L-leucine from 3-methyl-2-oxobutanoate: step 3/4. Catalyzes the oxidation of 3-carboxy-2-hydroxy-4-methylpentanoate (3-isopropylmalate) to 3-carboxy-4-methyl-2-oxopentanoate. The product decarboxylates to 4-methyl-2 oxopentanoate. The sequence is that of 3-isopropylmalate dehydrogenase from Parasynechococcus marenigrum (strain WH8102).